The following is a 184-amino-acid chain: Photosystem I assembly protein Ycf4 (184 aa).

A run of 2 helical transmembrane segments spans residues 22–42 (FCWAFILFFGSLGFLLVGTSS) and 57–77 (IVFFPQGIVMSFYGIAGLFIS).

The protein belongs to the Ycf4 family.

The protein localises to the plastid. The protein resides in the chloroplast thylakoid membrane. Seems to be required for the assembly of the photosystem I complex. The polypeptide is Photosystem I assembly protein Ycf4 (Gossypium barbadense (Sea Island cotton)).